The primary structure comprises 111 residues: Sulditoxin subunit B (111 aa).

An N-terminal signal peptide occupies residues Met-1–Ala-19. A propeptide spanning residues Asn-20–Arg-34 is cleaved from the precursor. Gln-35 bears the Pyrrolidone carboxylic acid mark. Intrachain disulfides connect Cys-44-Cys-68, Cys-47-Cys-55, Cys-61-Cys-87, Cys-91-Cys-102, and Cys-103-Cys-108.

The protein belongs to the three-finger toxin family. Ancestral subfamily. Boigatoxin sub-subfamily. As to quaternary structure, heterodimer of sulditoxin subunits A and B; probably disulfide-linked. In terms of tissue distribution, expressed by the venom gland.

It localises to the secreted. Reptile-specific neurotoxin (tested on geckos). Inhibits nicotinic acetylcholine receptor (nAChR). Not toxic to mammals (tested on mice). This Spilotes sulphureus (Amazon puffing snake) protein is Sulditoxin subunit B.